A 145-amino-acid chain; its full sequence is MDIRESRSQSPELSQSEDAVGPCPFLISVYHQFQTKNHVLDIFEDVIPSIQVYGWLTMTLYELGVLIADQLLLNNEETRHSEWSLQIRTIFYDKYKDRPIARDLGTVCLHNPKLFQGNKLLKRTGIKCGDKIDVTIKEDKIRIKK.

The protein belongs to the SAP18 family.

The protein localises to the cytoplasm. The protein resides in the nucleus. This is an uncharacterized protein from Schizosaccharomyces pombe (strain 972 / ATCC 24843) (Fission yeast).